Reading from the N-terminus, the 105-residue chain is Translation initiation factor 1A 2 (105 aa).

The disordered stretch occupies residues 1–22 (MRKRREGSAAPSTQEVTRVRTP). Positions 17–91 (TRVRTPRKEN…TKADVIWKYT (75 aa)) constitute an S1-like domain.

This sequence belongs to the eIF-1A family.

Its function is as follows. Seems to be required for maximal rate of protein biosynthesis. Enhances ribosome dissociation into subunits and stabilizes the binding of the initiator Met-tRNA(I) to 40 S ribosomal subunits. This chain is Translation initiation factor 1A 2 (eIF1A2), found in Methanosarcina acetivorans (strain ATCC 35395 / DSM 2834 / JCM 12185 / C2A).